Here is a 553-residue protein sequence, read N- to C-terminus: CTP synthase (553 aa).

The interval 1–277 (MPTEPETDYD…DQYVMEELDI (277 aa)) is amidoligase domain. Serine 26 contributes to the CTP binding site. A UTP-binding site is contributed by serine 26. ATP is bound by residues 27-32 (GLGKGI) and aspartate 84. The Mg(2+) site is built by aspartate 84 and glutamate 152. Residues 159 to 161 (DIE), 198 to 203 (KTKPTQ), and lysine 234 each bind CTP. UTP-binding positions include 198-203 (KTKPTQ) and lysine 234. Valine 252 is a binding site for ATP. Residues 307 to 544 (LVGKYDLEDA…LEAVLGDDPH (238 aa)) enclose the Glutamine amidotransferase type-1 domain. Glycine 364 contributes to the L-glutamine binding site. The Nucleophile; for glutamine hydrolysis role is filled by cysteine 391. Residues 392–395 (LGFQ), glutamate 415, and arginine 472 contribute to the L-glutamine site. Active-site residues include histidine 517 and glutamate 519.

This sequence belongs to the CTP synthase family. Homotetramer.

The protein localises to the cytoplasm. The catalysed reaction is UTP + L-glutamine + ATP + H2O = CTP + L-glutamate + ADP + phosphate + 2 H(+). It carries out the reaction L-glutamine + H2O = L-glutamate + NH4(+). It catalyses the reaction UTP + NH4(+) + ATP = CTP + ADP + phosphate + 2 H(+). It participates in pyrimidine metabolism; CTP biosynthesis via de novo pathway; CTP from UDP: step 2/2. Allosterically activated by GTP, when glutamine is the substrate; GTP has no effect on the reaction when ammonia is the substrate. The allosteric effector GTP functions by stabilizing the protein conformation that binds the tetrahedral intermediate(s) formed during glutamine hydrolysis. Inhibited by the product CTP, via allosteric rather than competitive inhibition. Inhibited by 6-diazo-5-oxo-l-norleucine (DON). Catalyzes the ATP-dependent amination of UTP to CTP with either L-glutamine or ammonia as the source of nitrogen. Regulates intracellular CTP levels through interactions with the four ribonucleotide triphosphates. The sequence is that of CTP synthase from Haloarcula hispanica (strain ATCC 33960 / DSM 4426 / JCM 8911 / NBRC 102182 / NCIMB 2187 / VKM B-1755).